Reading from the N-terminus, the 109-residue chain is MSNIGIDVKAPENVCEDVNCPFHGTLSVRGQIFEGVVSGDKGHNTIVIKREVTGYISKYERYEKRTTSLVAHNPPCINAKTGDVVKVMECRPVSKTKSFVVIEKTENLE.

Belongs to the universal ribosomal protein uS17 family. In terms of assembly, part of the 30S ribosomal subunit.

In terms of biological role, one of the primary rRNA binding proteins, it binds specifically to the 5'-end of 16S ribosomal RNA. This Methanococcus vannielii protein is Small ribosomal subunit protein uS17.